A 141-amino-acid chain; its full sequence is Large ribosomal subunit protein uL11 (141 aa).

The protein belongs to the universal ribosomal protein uL11 family. Part of the ribosomal stalk of the 50S ribosomal subunit. Interacts with L10 and the large rRNA to form the base of the stalk. L10 forms an elongated spine to which L12 dimers bind in a sequential fashion forming a multimeric L10(L12)X complex. In terms of processing, one or more lysine residues are methylated.

Functionally, forms part of the ribosomal stalk which helps the ribosome interact with GTP-bound translation factors. The chain is Large ribosomal subunit protein uL11 from Latilactobacillus sakei subsp. sakei (strain 23K) (Lactobacillus sakei subsp. sakei).